Reading from the N-terminus, the 352-residue chain is UDP-N-acetylglucosamine--N-acetylmuramyl-(pentapeptide) pyrophosphoryl-undecaprenol N-acetylglucosamine transferase (352 aa).

UDP-N-acetyl-alpha-D-glucosamine is bound by residues 11–13 (TGG), N120, R161, S188, and Q286.

It belongs to the glycosyltransferase 28 family. MurG subfamily.

It is found in the cell inner membrane. It catalyses the reaction di-trans,octa-cis-undecaprenyl diphospho-N-acetyl-alpha-D-muramoyl-L-alanyl-D-glutamyl-meso-2,6-diaminopimeloyl-D-alanyl-D-alanine + UDP-N-acetyl-alpha-D-glucosamine = di-trans,octa-cis-undecaprenyl diphospho-[N-acetyl-alpha-D-glucosaminyl-(1-&gt;4)]-N-acetyl-alpha-D-muramoyl-L-alanyl-D-glutamyl-meso-2,6-diaminopimeloyl-D-alanyl-D-alanine + UDP + H(+). Its pathway is cell wall biogenesis; peptidoglycan biosynthesis. In terms of biological role, cell wall formation. Catalyzes the transfer of a GlcNAc subunit on undecaprenyl-pyrophosphoryl-MurNAc-pentapeptide (lipid intermediate I) to form undecaprenyl-pyrophosphoryl-MurNAc-(pentapeptide)GlcNAc (lipid intermediate II). The polypeptide is UDP-N-acetylglucosamine--N-acetylmuramyl-(pentapeptide) pyrophosphoryl-undecaprenol N-acetylglucosamine transferase (Prochlorococcus marinus (strain NATL1A)).